The primary structure comprises 296 residues: MAFKYHKVAIVGKHYKKEVSQMVETLYAYLQQQGLEIIVENDTAADTSLVNVAIASLKEIALRCDVAIVVGGDGNFLKASRLLALYSNIPVIGINKGKLGFLTTLAADDNALKNDLYAILKGDSSVTKMSMLKCRVDNNLRAPLEASIALNEIAITASRGLMFGLKVFIDGRYAFDQRGDGLIVSTPTGSTAHAMSAGGPILNPNQNSVVLVPICSHSLNSRPLVISDESVIDIYITDYNDPEPVLSIDGRHDTILKAHQKVTIQKARKKVTVLHTKDYNYYDTLREKLGWSKVLF.

Asp73 serves as the catalytic Proton acceptor. NAD(+) contacts are provided by residues 73–74 (DG), Lys78, 151–152 (NE), Arg178, Asp180, and 191–196 (TAHAMS).

It belongs to the NAD kinase family. The cofactor is a divalent metal cation.

Its subcellular location is the cytoplasm. The enzyme catalyses NAD(+) + ATP = ADP + NADP(+) + H(+). Functionally, involved in the regulation of the intracellular balance of NAD and NADP, and is a key enzyme in the biosynthesis of NADP. Catalyzes specifically the phosphorylation on 2'-hydroxyl of the adenosine moiety of NAD to yield NADP. This Francisella tularensis subsp. holarctica (strain FTNF002-00 / FTA) protein is NAD kinase.